The sequence spans 30 residues: Conotoxin CcTx (30 aa).

Proline 2 bears the 4-hydroxyproline mark. Serine 7 is a glycosylation site (O-linked (HexNAc...) serine). Cystine bridges form between cysteine 12/cysteine 21, cysteine 13/cysteine 26, and cysteine 24/cysteine 30. A 4-hydroxyproline mark is found at proline 17 and proline 22.

O-glycosylated at Ser-7 by a core type 9 glycan, containing both D- and L-galactose units (alpha-L-Galp-(1-&gt;4)-alpha-D- GlcpNAc-(1-&gt;6)-[alpha-L-Galp-(1-&gt;2)-bets-D-Galp-(1-&gt;3)-]alpha-D-GalpNAc-(1-&gt;O)). Expressed by the venom duct.

It is found in the secreted. Functionally, may specifically activate neuronal voltage-gated sodium channels (Nav) at the resting membrane potential. Causes a marked contraction and extension of the caudal and dorsal fins in fish and noticeable spontaneous contractions of isolated frog neuromuscular preparations. The polypeptide is Conotoxin CcTx (Conus consors (Singed cone)).